The sequence spans 473 residues: Fumarate hydratase class II 2 (473 aa).

Residues 1–28 (MAKSARTKTARPATRTETDSFGPIEVPS) are disordered. Substrate contacts are provided by residues 108–110 (SGT), 139–142 (HPND), 149–151 (SSN), and Thr-197. His-198 (proton donor/acceptor) is an active-site residue. Ser-328 is an active-site residue. Substrate contacts are provided by residues Ser-329 and 334 to 336 (KVN).

It belongs to the class-II fumarase/aspartase family. Fumarase subfamily. As to quaternary structure, homotetramer.

The protein localises to the cytoplasm. It carries out the reaction (S)-malate = fumarate + H2O. It functions in the pathway carbohydrate metabolism; tricarboxylic acid cycle; (S)-malate from fumarate: step 1/1. In terms of biological role, involved in the TCA cycle. Catalyzes the stereospecific interconversion of fumarate to L-malate. In Bradyrhizobium diazoefficiens (strain JCM 10833 / BCRC 13528 / IAM 13628 / NBRC 14792 / USDA 110), this protein is Fumarate hydratase class II 2.